The primary structure comprises 141 residues: Hemoglobin subunit alpha-1 (141 aa).

The region spanning 1 to 141 (VLTEDDKNHI…VAKTLVAHYR (141 aa)) is the Globin domain. His58 contributes to the O2 binding site. His87 lines the heme b pocket.

The protein belongs to the globin family. As to quaternary structure, heterotetramer of two alpha chains and two beta chains. In terms of tissue distribution, red blood cells.

In terms of biological role, involved in oxygen transport from the lung to the various peripheral tissues. The chain is Hemoglobin subunit alpha-1 from Iguana iguana (Common iguana).